Consider the following 294-residue polypeptide: Protoheme IX farnesyltransferase (294 aa).

The next 9 membrane-spanning stretches (helical) occupy residues 13 to 33, 35 to 55, 84 to 104, 107 to 127, 132 to 152, 162 to 182, 208 to 228, 229 to 249, and 264 to 284; these read IIFGNLISVIGGFLLASKGVI, YPLFISTLLGVSLVVASGCVF, ISLIYASILGIAGIVLLYAAA, LAMQLAIIGFVVYVGVYSLYM, VYGTLIGSLSGAAPPVIGYCA, LILLLIFSLWQMPHSYAIAIF, IILYILAFMIATLMLAISGYA, GYKYLVVAAAVSVWWLGMALS, and FIFSIVAITSLSVMMSIDPHV.

This sequence belongs to the UbiA prenyltransferase family. Protoheme IX farnesyltransferase subfamily.

It is found in the cell inner membrane. The catalysed reaction is heme b + (2E,6E)-farnesyl diphosphate + H2O = Fe(II)-heme o + diphosphate. It functions in the pathway porphyrin-containing compound metabolism; heme O biosynthesis; heme O from protoheme: step 1/1. In terms of biological role, converts heme B (protoheme IX) to heme O by substitution of the vinyl group on carbon 2 of heme B porphyrin ring with a hydroxyethyl farnesyl side group. The polypeptide is Protoheme IX farnesyltransferase (Photorhabdus laumondii subsp. laumondii (strain DSM 15139 / CIP 105565 / TT01) (Photorhabdus luminescens subsp. laumondii)).